Consider the following 204-residue polypeptide: Urease accessory protein UreG (204 aa).

Residue 12–19 (GPVGSGKT) participates in GTP binding.

It belongs to the SIMIBI class G3E GTPase family. UreG subfamily. In terms of assembly, homodimer. UreD, UreF and UreG form a complex that acts as a GTP-hydrolysis-dependent molecular chaperone, activating the urease apoprotein by helping to assemble the nickel containing metallocenter of UreC. The UreE protein probably delivers the nickel.

The protein resides in the cytoplasm. Its function is as follows. Facilitates the functional incorporation of the urease nickel metallocenter. This process requires GTP hydrolysis, probably effectuated by UreG. The protein is Urease accessory protein UreG of Streptococcus salivarius (strain 57.I).